A 53-amino-acid chain; its full sequence is UPF0391 membrane protein BP1737 (53 aa).

The next 2 membrane-spanning stretches (helical) occupy residues 5–25 (AVVF…GIAA) and 30–50 (IAKI…LGGV).

This sequence belongs to the UPF0391 family.

It localises to the cell membrane. The chain is UPF0391 membrane protein BP1737 from Bordetella pertussis (strain Tohama I / ATCC BAA-589 / NCTC 13251).